The following is a 393-amino-acid chain: UDP-N-acetylglucosamine--N-acetylmuramyl-(pentapeptide) pyrophosphoryl-undecaprenol N-acetylglucosamine transferase (393 aa).

Residues 14 to 16 (TAG), Asn-128, Arg-170, Ser-210, and Gln-321 contribute to the UDP-N-acetyl-alpha-D-glucosamine site.

It belongs to the glycosyltransferase 28 family. MurG subfamily.

The protein resides in the cell membrane. The enzyme catalyses di-trans,octa-cis-undecaprenyl diphospho-N-acetyl-alpha-D-muramoyl-L-alanyl-D-glutamyl-meso-2,6-diaminopimeloyl-D-alanyl-D-alanine + UDP-N-acetyl-alpha-D-glucosamine = di-trans,octa-cis-undecaprenyl diphospho-[N-acetyl-alpha-D-glucosaminyl-(1-&gt;4)]-N-acetyl-alpha-D-muramoyl-L-alanyl-D-glutamyl-meso-2,6-diaminopimeloyl-D-alanyl-D-alanine + UDP + H(+). It participates in cell wall biogenesis; peptidoglycan biosynthesis. Functionally, cell wall formation. Catalyzes the transfer of a GlcNAc subunit on undecaprenyl-pyrophosphoryl-MurNAc-pentapeptide (lipid intermediate I) to form undecaprenyl-pyrophosphoryl-MurNAc-(pentapeptide)GlcNAc (lipid intermediate II). This Bifidobacterium adolescentis (strain ATCC 15703 / DSM 20083 / NCTC 11814 / E194a) protein is UDP-N-acetylglucosamine--N-acetylmuramyl-(pentapeptide) pyrophosphoryl-undecaprenol N-acetylglucosamine transferase.